Reading from the N-terminus, the 103-residue chain is Large ribosomal subunit protein bL21 (103 aa).

Belongs to the bacterial ribosomal protein bL21 family. Part of the 50S ribosomal subunit. Contacts protein L20.

This protein binds to 23S rRNA in the presence of protein L20. The sequence is that of Large ribosomal subunit protein bL21 from Marinobacter nauticus (strain ATCC 700491 / DSM 11845 / VT8) (Marinobacter aquaeolei).